The chain runs to 470 residues: Probable G-protein coupled receptor 152 (470 aa).

Residues 1–25 (MDTTMEADLGATGHRPRTELDDEDS) form a disordered region. Residues 1–33 (MDTTMEADLGATGHRPRTELDDEDSYPQGGWDT) are Extracellular-facing. The chain crosses the membrane as a helical span at residues 34 to 54 (VFLVALLLLGLPANGLMAWLA). The Cytoplasmic segment spans residues 55 to 65 (GSQARHGAGTR). Residues 66 to 86 (LALLLLSLALSDFLFLAAAAF) form a helical membrane-spanning segment. Residues 87–105 (QILEIRHGGHWPLGTAACR) lie on the Extracellular side of the membrane. Cysteine 104 and cysteine 182 are joined by a disulfide. Residues 106 to 126 (FYYFLWGVSYSSGLFLLAALS) form a helical membrane-spanning segment. At 127–148 (LDRCLLALCPHWYPGHRPVRLP) the chain is on the cytoplasmic side. Residues 149-169 (LWVCAGVWVLATLFSVPWLVF) form a helical membrane-spanning segment. At 170 to 194 (PEAAVWWYDLVICLDFWDSEELSLR) the chain is on the extracellular side. The helical transmembrane segment at 195 to 215 (MLEVLGGFLPFLLLLVCHVLT) threads the bilayer. The Cytoplasmic portion of the chain corresponds to 216–257 (QATACRTCHRQQQPAACRGFARVARTILSAYVVLRLPYQLAQ). The chain crosses the membrane as a helical span at residues 258–278 (LLYLAFLWDVYSGYLLWEALV). Residues 279–281 (YSD) are Extracellular-facing. Residues 282–302 (YLILLNSCLSPFLCLMASADL) form a helical membrane-spanning segment. Residues 303–470 (RTLLRSVLSS…PEAAPGAGPT (168 aa)) are Cytoplasmic-facing. The segment at 322–470 (PGSFTPTEPQ…PEAAPGAGPT (149 aa)) is disordered. Polar residues-rich tracts occupy residues 325–335 (FTPTEPQTQLD) and 348–414 (AQSQ…NVQT). Residues 415–425 (PAPAASSVPSP) show a composition bias toward low complexity.

It belongs to the G-protein coupled receptor 1 family.

The protein localises to the cell membrane. Orphan receptor. This chain is Probable G-protein coupled receptor 152 (GPR152), found in Homo sapiens (Human).